A 321-amino-acid polypeptide reads, in one-letter code: Holliday junction branch migration complex subunit RuvB (321 aa).

Residues 1–173 (MMMEQECVDD…FGIISRLEFY (173 aa)) form a large ATPase domain (RuvB-L) region. Residues Ile-12, Arg-13, Gly-54, Lys-57, Thr-58, Thr-59, 120-122 (EDF), Arg-163, Tyr-173, and Arg-210 each bind ATP. A Mg(2+)-binding site is contributed by Thr-58. Residues 174 to 244 (TPAELACIVK…LASDALARMD (71 aa)) are small ATPAse domain (RuvB-S). Positions 247–321 (ELGLDQMDRK…KAYRHMNLLA (75 aa)) are head domain (RuvB-H). The DNA site is built by Arg-302 and Arg-307.

Belongs to the RuvB family. In terms of assembly, homohexamer. Forms an RuvA(8)-RuvB(12)-Holliday junction (HJ) complex. HJ DNA is sandwiched between 2 RuvA tetramers; dsDNA enters through RuvA and exits via RuvB. An RuvB hexamer assembles on each DNA strand where it exits the tetramer. Each RuvB hexamer is contacted by two RuvA subunits (via domain III) on 2 adjacent RuvB subunits; this complex drives branch migration. In the full resolvosome a probable DNA-RuvA(4)-RuvB(12)-RuvC(2) complex forms which resolves the HJ.

Its subcellular location is the cytoplasm. The catalysed reaction is ATP + H2O = ADP + phosphate + H(+). Its function is as follows. The RuvA-RuvB-RuvC complex processes Holliday junction (HJ) DNA during genetic recombination and DNA repair, while the RuvA-RuvB complex plays an important role in the rescue of blocked DNA replication forks via replication fork reversal (RFR). RuvA specifically binds to HJ cruciform DNA, conferring on it an open structure. The RuvB hexamer acts as an ATP-dependent pump, pulling dsDNA into and through the RuvAB complex. RuvB forms 2 homohexamers on either side of HJ DNA bound by 1 or 2 RuvA tetramers; 4 subunits per hexamer contact DNA at a time. Coordinated motions by a converter formed by DNA-disengaged RuvB subunits stimulates ATP hydrolysis and nucleotide exchange. Immobilization of the converter enables RuvB to convert the ATP-contained energy into a lever motion, pulling 2 nucleotides of DNA out of the RuvA tetramer per ATP hydrolyzed, thus driving DNA branch migration. The RuvB motors rotate together with the DNA substrate, which together with the progressing nucleotide cycle form the mechanistic basis for DNA recombination by continuous HJ branch migration. Branch migration allows RuvC to scan DNA until it finds its consensus sequence, where it cleaves and resolves cruciform DNA. This is Holliday junction branch migration complex subunit RuvB from Oleidesulfovibrio alaskensis (strain ATCC BAA-1058 / DSM 17464 / G20) (Desulfovibrio alaskensis).